We begin with the raw amino-acid sequence, 271 residues long: Putative mitochondrial carrier protein PET8 (271 aa).

Solcar repeat units lie at residues serine 3–glutamine 76, alanine 91–lysine 177, and valine 187–leucine 270. A run of 6 helical transmembrane segments spans residues leucine 6 to isoleucine 26, glycine 51 to aspartate 71, methionine 97 to isoleucine 117, glycine 152 to phenylalanine 168, alanine 193 to leucine 213, and methionine 251 to phenylalanine 271.

Belongs to the mitochondrial carrier (TC 2.A.29) family.

It is found in the mitochondrion inner membrane. This Eremothecium gossypii (strain ATCC 10895 / CBS 109.51 / FGSC 9923 / NRRL Y-1056) (Yeast) protein is Putative mitochondrial carrier protein PET8 (PET8).